The primary structure comprises 200 residues: Prolactin (200 aa).

3 disulfides stabilise this stretch: Cys4/Cys11, Cys59/Cys175, and Cys192/Cys200.

The protein belongs to the somatotropin/prolactin family. In terms of tissue distribution, pituitary gland.

Its subcellular location is the secreted. This chain is Prolactin (prl), found in Protopterus aethiopicus (Marbled lungfish).